Consider the following 399-residue polypeptide: Bone morphogenetic protein 8B (399 aa).

Residues 1–19 form the signal peptide; the sequence is MAARPGLLWLLGLALCVLG. A propeptide spanning residues 20–260 is cleaved from the precursor; sequence GGHLSHPPHV…ANQSPVRAPR (241 aa). N-linked (GlcNAc...) asparagine glycosylation is found at Asn155 and Asn340. Disulfide bonds link Cys298–Cys364, Cys327–Cys396, and Cys331–Cys398.

This sequence belongs to the TGF-beta family. Homodimer; disulfide-linked. Expressed in testis. Expressed in decidual cells of the uterus and in trophoblast cells of the labyrinthine region of the placenta and in the inner root sheath of hair follicles of early postnatal skin. Expressed in the extraembryonic ectoderm in pregastrula and gastrula stage mouse embryos. Expressed in brown adipose tissue and brain.

It localises to the secreted. In terms of biological role, induces cartilage and bone formation. May be the osteoinductive factor responsible for the phenomenon of epithelial osteogenesis. Plays a role in calcium regulation and bone homeostasis. Involved in the generation of primordial germ cells; this function involves Bmp4 in a synergistic manner though separate receptor complexes seem to be involved. Required for the initiation and maintenance of spermatogenesis. Signaling protein involved in regulation of thermogenesis and energy balance. Proposed to increase the peripheral response of brown adipose tissue (BAT) to adrenergic stimulation while acting centrally in the hypothalamus to increase sympathetic output to BAT. This Mus musculus (Mouse) protein is Bone morphogenetic protein 8B (Bmp8b).